A 157-amino-acid chain; its full sequence is MDRFNCILNDTEYIYYLKRNKKFEKDRKFCKHNLKHFLDVARIAQLINLEESLGFNKEIIYTTAILHDIGKSLQYENGTPHEISSWEISKEILHNYRYNEEEIEIIKQGILGHRDKKSENFAQLMYRADKLSRLCISCKSIDECNWGDEKKNFKIYY.

The 102-residue stretch at 33 to 134 (NLKHFLDVAR…MYRADKLSRL (102 aa)) folds into the HD domain.

This is an uncharacterized protein from Clostridium beijerinckii (strain ATCC 51743 / NCIMB 8052) (Clostridium acetobutylicum).